The sequence spans 158 residues: Transcription elongation factor GreA (158 aa).

The protein belongs to the GreA/GreB family.

In terms of biological role, necessary for efficient RNA polymerase transcription elongation past template-encoded arresting sites. The arresting sites in DNA have the property of trapping a certain fraction of elongating RNA polymerases that pass through, resulting in locked ternary complexes. Cleavage of the nascent transcript by cleavage factors such as GreA or GreB allows the resumption of elongation from the new 3'terminus. GreA releases sequences of 2 to 3 nucleotides. In Macrococcus caseolyticus (strain JCSC5402) (Macrococcoides caseolyticum), this protein is Transcription elongation factor GreA.